We begin with the raw amino-acid sequence, 310 residues long: Putative methyltransferase mtx subunit H (310 aa).

The protein belongs to the MtrH family. As to quaternary structure, may be part of a complex composed of 3 subunits; MtxA, MtxH and MtxX.

The polypeptide is Putative methyltransferase mtx subunit H (mtxH) (Methanosarcina mazei (strain ATCC BAA-159 / DSM 3647 / Goe1 / Go1 / JCM 11833 / OCM 88) (Methanosarcina frisia)).